A 290-amino-acid polypeptide reads, in one-letter code: UPF0761 membrane protein YihY (290 aa).

6 helical membrane passes run 44–64, 104–124, 140–160, 183–203, 210–230, and 244–264; these read LLSL…FPMF, VGAC…DSAL, FAVY…SLAI, IFPL…VPTI, AIVG…GFAL, and VLAV…IVLL.

It belongs to the UPF0761 family.

Its subcellular location is the cell inner membrane. In Escherichia coli O127:H6 (strain E2348/69 / EPEC), this protein is UPF0761 membrane protein YihY.